Here is a 389-residue protein sequence, read N- to C-terminus: S-adenosylmethionine synthase (389 aa).

His15 contributes to the ATP binding site. A Mg(2+)-binding site is contributed by Asp17. Glu43 provides a ligand contact to K(+). Residues Glu56 and Gln99 each coordinate L-methionine. Residues 99–109 are flexible loop; that stretch reads QSPDIAQGVNE. ATP-binding positions include 166–168, 234–235, Asp243, 249–250, Ala266, and Lys270; these read DAK, RF, and RK. Asp243 lines the L-methionine pocket. Lys274 serves as a coordination point for L-methionine.

Belongs to the AdoMet synthase family. Homotetramer; dimer of dimers. It depends on Mg(2+) as a cofactor. The cofactor is K(+).

It localises to the cytoplasm. It catalyses the reaction L-methionine + ATP + H2O = S-adenosyl-L-methionine + phosphate + diphosphate. Its pathway is amino-acid biosynthesis; S-adenosyl-L-methionine biosynthesis; S-adenosyl-L-methionine from L-methionine: step 1/1. Its function is as follows. Catalyzes the formation of S-adenosylmethionine (AdoMet) from methionine and ATP. The overall synthetic reaction is composed of two sequential steps, AdoMet formation and the subsequent tripolyphosphate hydrolysis which occurs prior to release of AdoMet from the enzyme. The polypeptide is S-adenosylmethionine synthase (Neisseria meningitidis serogroup B (strain ATCC BAA-335 / MC58)).